We begin with the raw amino-acid sequence, 609 residues long: Pair-rule protein odd-paired (609 aa).

The disordered stretch occupies residues 20–41; sequence RMSPNTTASNSNAQQQQQQQLE. The span at 22-32 shows a compositional bias: polar residues; that stretch reads SPNTTASNSNA. The C2H2-type 1; atypical zinc finger occupies 210 to 249; the sequence is MQCLWIDPDQPGLVPPGGRKTCNKVFHSMHEIVTHLTVEH. C2H2-type zinc fingers lie at residues 258–285, 291–315, 321–345, and 351–375; these read HACF…IRVH, FACP…KRTH, FKCE…SHVH, and YNCR…MKVH. Disordered stretches follow at residues 373-550 and 583-609; these read KVHG…ASAS and EAMN…ATAY. Over residues 399 to 409 the composition is skewed to polar residues; that stretch reads IITGGAQTPPS. Low complexity-rich tracts occupy residues 414 to 434 and 449 to 498; these read GSAG…IKSS and HLGA…LTAH. A compositionally biased stretch (basic residues) spans 528-537; it reads SHHHHPHHHQ. Over residues 538–550 the composition is skewed to low complexity; sequence AAPSPGAAAASAS. The segment covering 591–601 has biased composition (basic residues); it reads FGHHHHHHHLM.

The protein belongs to the GLI C2H2-type zinc-finger protein family. Expressed throughout all segment primordia; expressed ubiquitously in the ectoderm and mesoderm precursors.

It localises to the nucleus. Its function is as follows. Transcription factor essential for parasegmental subdivision of the embryo. It is involved in the activation of wingless (wg) in odd parasegments. It is also required for the timely activation of wg in the remaining parasegments and for the timely activation of engrailed (en) in all parasegments. The chain is Pair-rule protein odd-paired (opa) from Drosophila melanogaster (Fruit fly).